Consider the following 202-residue polypeptide: Oxopyrrolidines biosynthesis cluster protein O (202 aa).

Its function is as follows. Part of the gene cluster that mediates the biosynthesis of oxopyrrolidines, polyketide-amino acid hybrid compounds with feature structures of tetramic acid. Does not seem to play a role in oxopyrrolidines A and B biosynthesis. The chain is Oxopyrrolidines biosynthesis cluster protein O from Penicillium oxalicum (strain 114-2 / CGMCC 5302) (Penicillium decumbens).